A 298-amino-acid polypeptide reads, in one-letter code: Sulfate adenylyltransferase subunit 2 (298 aa).

Basic and acidic residues-rich tracts occupy residues 272 to 282 (RTSERQGRLID) and 289 to 298 (MEKKKQEGYF). Residues 272–298 (RTSERQGRLIDSDSAGSMEKKKQEGYF) are disordered.

The protein belongs to the PAPS reductase family. CysD subfamily. In terms of assembly, heterodimer composed of CysD, the smaller subunit, and CysN.

It catalyses the reaction sulfate + ATP + H(+) = adenosine 5'-phosphosulfate + diphosphate. The protein operates within sulfur metabolism; hydrogen sulfide biosynthesis; sulfite from sulfate: step 1/3. In terms of biological role, with CysN forms the ATP sulfurylase (ATPS) that catalyzes the adenylation of sulfate producing adenosine 5'-phosphosulfate (APS) and diphosphate, the first enzymatic step in sulfur assimilation pathway. APS synthesis involves the formation of a high-energy phosphoric-sulfuric acid anhydride bond driven by GTP hydrolysis by CysN coupled to ATP hydrolysis by CysD. The polypeptide is Sulfate adenylyltransferase subunit 2 (Burkholderia lata (strain ATCC 17760 / DSM 23089 / LMG 22485 / NCIMB 9086 / R18194 / 383)).